A 338-amino-acid chain; its full sequence is MKELDQILEKCAEEIDPLSHEIAERIRKLKNLPKDEMFLEYLRIIDFTSTTKIPWRKKNYILIILWKYGEKIERLLYSRLEHFGRANVPKRYFRLVDGKILSMLFLVFILFPAFTSHIWSFRLGYEEIQVGKEITFNENLCEYRTAWLYDFKASMVCTIKYGYGKVNIRLNSTNPMEAGVEVQRFISQIPYDYARLESGFSYIQTPRETIGRRIGVCSDFAILTAQVLLDNNVSPVYIIHTLFKGDITGGHATAALFINGTLWIFDWGSAPVTFSEYLDTIDRLWEVREVRVYRLTESSIVLDRVYKGEPESDAWRYVYTLTMLIGIFIIKRREWLWI.

A helical membrane pass occupies residues 100–120; sequence ILSMLFLVFILFPAFTSHIWS.

It belongs to the UPF0252 family.

It is found in the membrane. The chain is UPF0252 protein PF1496 from Pyrococcus furiosus (strain ATCC 43587 / DSM 3638 / JCM 8422 / Vc1).